The following is a 407-amino-acid chain: Glucan 1,3-beta-glucosidase 1 (407 aa).

The signal sequence occupies residues 1 to 22 (MLSFTSVFSFFLHALLLKTAFS). Glu-213 acts as the Proton donor in catalysis. Cys-295 and Cys-406 form a disulfide bridge. Glu-312 functions as the Nucleophile in the catalytic mechanism.

It belongs to the glycosyl hydrolase 5 (cellulase A) family.

Its subcellular location is the secreted. It carries out the reaction Successive hydrolysis of beta-D-glucose units from the non-reducing ends of (1-&gt;3)-beta-D-glucans, releasing alpha-glucose.. Its function is as follows. Beta-glucanases participate in the metabolism of beta-glucan, the main structural component of the cell wall. It could also function biosynthetically as a transglycosylase. In Schizosaccharomyces pombe (strain 972 / ATCC 24843) (Fission yeast), this protein is Glucan 1,3-beta-glucosidase 1 (exg1).